Consider the following 357-residue polypeptide: Protein RecA (357 aa).

An ATP-binding site is contributed by 67–74; the sequence is GPESSGKT. The tract at residues 334 to 357 is disordered; that stretch reads ELKPAAAGNSHDEDELAGEGKEEF.

This sequence belongs to the RecA family.

The protein localises to the cytoplasm. In terms of biological role, can catalyze the hydrolysis of ATP in the presence of single-stranded DNA, the ATP-dependent uptake of single-stranded DNA by duplex DNA, and the ATP-dependent hybridization of homologous single-stranded DNAs. It interacts with LexA causing its activation and leading to its autocatalytic cleavage. This chain is Protein RecA, found in Pectobacterium atrosepticum (strain SCRI 1043 / ATCC BAA-672) (Erwinia carotovora subsp. atroseptica).